Consider the following 556-residue polypeptide: Dihydroxy-acid dehydratase (556 aa).

Cys-47 contacts [2Fe-2S] cluster. Mg(2+) is bound at residue Asp-79. Residue Cys-120 participates in [2Fe-2S] cluster binding. 2 residues coordinate Mg(2+): Asp-121 and Lys-122. The residue at position 122 (Lys-122) is an N6-carboxylysine. Residue Cys-192 participates in [2Fe-2S] cluster binding. Residue Glu-444 coordinates Mg(2+). Ser-470 functions as the Proton acceptor in the catalytic mechanism.

It belongs to the IlvD/Edd family. In terms of assembly, homodimer. It depends on [2Fe-2S] cluster as a cofactor. Requires Mg(2+) as cofactor.

It carries out the reaction (2R)-2,3-dihydroxy-3-methylbutanoate = 3-methyl-2-oxobutanoate + H2O. The catalysed reaction is (2R,3R)-2,3-dihydroxy-3-methylpentanoate = (S)-3-methyl-2-oxopentanoate + H2O. Its pathway is amino-acid biosynthesis; L-isoleucine biosynthesis; L-isoleucine from 2-oxobutanoate: step 3/4. It participates in amino-acid biosynthesis; L-valine biosynthesis; L-valine from pyruvate: step 3/4. Its function is as follows. Functions in the biosynthesis of branched-chain amino acids. Catalyzes the dehydration of (2R,3R)-2,3-dihydroxy-3-methylpentanoate (2,3-dihydroxy-3-methylvalerate) into 2-oxo-3-methylpentanoate (2-oxo-3-methylvalerate) and of (2R)-2,3-dihydroxy-3-methylbutanoate (2,3-dihydroxyisovalerate) into 2-oxo-3-methylbutanoate (2-oxoisovalerate), the penultimate precursor to L-isoleucine and L-valine, respectively. This Prochlorococcus marinus (strain NATL2A) protein is Dihydroxy-acid dehydratase.